The primary structure comprises 350 residues: Heat-inducible transcription repressor HrcA (350 aa).

This sequence belongs to the HrcA family.

Its function is as follows. Negative regulator of class I heat shock genes (grpE-dnaK-dnaJ and groELS operons). Prevents heat-shock induction of these operons. This chain is Heat-inducible transcription repressor HrcA, found in Xanthomonas campestris pv. campestris (strain ATCC 33913 / DSM 3586 / NCPPB 528 / LMG 568 / P 25).